We begin with the raw amino-acid sequence, 385 residues long: ATP phosphoribosyltransferase regulatory subunit (385 aa).

The protein belongs to the class-II aminoacyl-tRNA synthetase family. HisZ subfamily. As to quaternary structure, heteromultimer composed of HisG and HisZ subunits.

The protein localises to the cytoplasm. It functions in the pathway amino-acid biosynthesis; L-histidine biosynthesis; L-histidine from 5-phospho-alpha-D-ribose 1-diphosphate: step 1/9. Required for the first step of histidine biosynthesis. May allow the feedback regulation of ATP phosphoribosyltransferase activity by histidine. In Lysinibacillus sphaericus (strain C3-41), this protein is ATP phosphoribosyltransferase regulatory subunit.